Here is a 319-residue protein sequence, read N- to C-terminus: Ferrochelatase (319 aa).

Residues His194 and Glu275 each coordinate Fe cation.

Belongs to the ferrochelatase family.

Its subcellular location is the cytoplasm. The enzyme catalyses heme b + 2 H(+) = protoporphyrin IX + Fe(2+). The protein operates within porphyrin-containing compound metabolism; protoheme biosynthesis; protoheme from protoporphyrin-IX: step 1/1. Functionally, catalyzes the ferrous insertion into protoporphyrin IX. In Vibrio vulnificus (strain CMCP6), this protein is Ferrochelatase.